Reading from the N-terminus, the 209-residue chain is Ribosomal RNA small subunit methyltransferase G (209 aa).

Residues glycine 74, phenylalanine 79, and arginine 139 each coordinate S-adenosyl-L-methionine.

This sequence belongs to the methyltransferase superfamily. RNA methyltransferase RsmG family.

Its subcellular location is the cytoplasm. It carries out the reaction guanosine(527) in 16S rRNA + S-adenosyl-L-methionine = N(7)-methylguanosine(527) in 16S rRNA + S-adenosyl-L-homocysteine. Its function is as follows. Specifically methylates the N7 position of guanine in position 527 of 16S rRNA. The chain is Ribosomal RNA small subunit methyltransferase G from Halorhodospira halophila (strain DSM 244 / SL1) (Ectothiorhodospira halophila (strain DSM 244 / SL1)).